The following is a 571-amino-acid chain: Zinc metalloproteinase-disintegrin-like jararhagin (571 aa).

The propeptide occupies 1-150 (ATRPKGAVQP…KKASQLAFTA (150 aa)). E151 bears the Pyrrolidone carboxylic acid (Glu) mark. Residues 159–355 (KYIEFFVVVD…HNPECIINEP (197 aa)) enclose the Peptidase M12B domain. Ca(2+)-binding residues include E162 and D246. 3 disulfide bridges follow: C270/C350, C310/C334, and C312/C317. Residue H295 participates in Zn(2+) binding. The active site involves E296. Residues H299 and H305 each contribute to the Zn(2+) site. A glycan (N-linked (GlcNAc...) asparagine) is linked at N333. 8 residues coordinate Ca(2+): C350, N353, V365, N368, L370, E372, E375, and D378. A Disintegrin domain is found at 363-449 (PPVCGNELLE…ECPADVFHKN (87 aa)). Disulfide bonds link C366-C385, C366-C395, C377-C390, C377-C395, C379-C385, C389-C412, C403-C409, C408-C434, C421-C441, C428-C453, C428-C460, C453-C465, C460-C465, C472-C487, C472-C522, C487-C533, C500-C510, C510-C517, C517-C559, C522-C533, C553-C564, and C559-C564. Residues 427 to 429 (ECD) carry the D/ECD-tripeptide motif. The Ca(2+) site is built by D429, P430, E432, D444, and V445.

This sequence belongs to the venom metalloproteinase (M12B) family. P-III subfamily. P-IIIb sub-subfamily. As to quaternary structure, monomer (Jararhagin and Jararhagin-C) and dimer (Jaracetin). Zn(2+) serves as cofactor. In terms of processing, the N-terminus of Jararhagin is blocked. Expressed by the venom gland.

The protein resides in the secreted. The enzyme catalyses Cleavage of 10-His-|-Leu-11, 14-Ala-|-Leu-15, 16-Tyr-|-Leu-17 and 24-Phe-|-Phe-25 bonds in insulin B chain.. Inhibited by EDTA, 1,10 phenanthroline and batimastat (a peptidomimetic MMP inhibitor). Functionally, snake venom zinc metalloproteinase-disintegrin-like jararhagin: causes hemorrhage. This is the result of the degradation of sub-endothelial matrix proteins leading to the disruption of the blood vessel endothelium, with accompanying disturbances in platelet function. It is able to degrade von Willebrand factor (vWF) and it hydrolyzes the alpha-chain of fibrinogen (FGA) while leaving the beta and gamma chains unaffected. It inhibits collagen-induced platelet aggregation through the binding to alpha-2/beta-1 integrin (ITGA2/ITGB1) (collagen receptor), and it cleaves the beta-1 subunit of the same integrin, inhibiting platelet interaction and ultimately causing impairment of signal transduction. It has inability to be affected by the plasma inhibitor alpha(2)-macroglobulin. In fibroblasts, it functions as a collagen-mimetic substrate and, in endothelial cells, it causes apoptosis and indirectly inhibits cell proliferation by release of angiostatin-like compounds. It induces a strong pro-inflammatory response characterized by intense leukocyte accumulation and release of cytokines at the site of the injection. Although hemorrhage and edema are a response to the direct effect of this toxin, jararhagin-induced inflammation and necrosis are dependent on macrophages and key pro-inflammatory cytokines or their receptors. It also possesses anti-tumorgenic properties. The monomeric form inhibits collagen- and ADP-induced platelet aggregation, but has no effect on glycoprotein Ib-IX-dependent (GP1BA/GP5/GP9) platelet agglutination. Locally activates the early events of an acute inflammatory response as leukocyte rolling and pro-inflammatory cytokine release. In terms of biological role, the dimeric form jaracetin may be a dimeric form of jararhagin-C. It binds to von Willebrand factor (VWF) and induces its interaction with GPIbalpha (GP1BA) (via the vWF A1 domain), resulting in platelet aggregation. Also binds the alpha-2 subunit of the alpha-2/beta-1 (ITGA2/ITGB1) integrin. It potently induces platelet aggregation in citrated platelet-rich plasma. The chain is Zinc metalloproteinase-disintegrin-like jararhagin from Bothrops jararaca (Jararaca).